Here is a 518-residue protein sequence, read N- to C-terminus: Zinc finger protein 449 (518 aa).

In terms of domain architecture, SCAN box spans 30 to 112 (RQRFRQFQYR…SLIEDLQREL (83 aa)). A compositionally biased stretch (polar residues) spans 292–304 (NPTLGETPENSNL). A disordered region spans residues 292–325 (NPTLGETPENSNLEEPLNPKPHKKKSPGEKPHRC). C2H2-type zinc fingers lie at residues 323 to 345 (HRCP…QRIH), 351 to 373 (HKCP…QRLH), 379 to 401 (YECT…QRTH), 407 to 429 (YKCL…LKTH), 435 to 457 (HRCH…QRTH), 463 to 485 (FKCN…LRIH), and 491 to 513 (YKCT…QVTH).

It belongs to the krueppel C2H2-type zinc-finger protein family.

The protein localises to the nucleus. May be involved in transcriptional regulation. In Homo sapiens (Human), this protein is Zinc finger protein 449 (ZNF449).